Reading from the N-terminus, the 351-residue chain is Uroporphyrinogen decarboxylase (351 aa).

Residues 25 to 29, Asp-74, Tyr-151, Ser-206, and His-325 contribute to the substrate site; that span reads RQAGR.

Belongs to the uroporphyrinogen decarboxylase family. In terms of assembly, homodimer.

It is found in the cytoplasm. It carries out the reaction uroporphyrinogen III + 4 H(+) = coproporphyrinogen III + 4 CO2. It functions in the pathway porphyrin-containing compound metabolism; protoporphyrin-IX biosynthesis; coproporphyrinogen-III from 5-aminolevulinate: step 4/4. Functionally, catalyzes the decarboxylation of four acetate groups of uroporphyrinogen-III to yield coproporphyrinogen-III. This chain is Uroporphyrinogen decarboxylase, found in Chlorobium limicola (strain DSM 245 / NBRC 103803 / 6330).